Reading from the N-terminus, the 131-residue chain is Small ribosomal subunit protein uS8 (131 aa).

Belongs to the universal ribosomal protein uS8 family. In terms of assembly, part of the 30S ribosomal subunit. Contacts proteins S5 and S12.

One of the primary rRNA binding proteins, it binds directly to 16S rRNA central domain where it helps coordinate assembly of the platform of the 30S subunit. In Solibacter usitatus (strain Ellin6076), this protein is Small ribosomal subunit protein uS8.